The chain runs to 267 residues: Ribosomal RNA small subunit methyltransferase NEP1 (267 aa).

Residues 1 to 46 (MSELKNGTTEPKKNETTQSDSKSKSTSTNKSSVPPASLVPVQPTAL) are disordered. Low complexity predominate over residues 16–32 (TTQSDSKSKSTSTNKSS). S-adenosyl-L-methionine-binding positions include Leu-195, Gly-222, 227–229 (GKD), and 242–247 (LSDYPL).

Belongs to the class IV-like SAM-binding methyltransferase superfamily. RNA methyltransferase NEP1 family. In terms of assembly, homodimer.

It localises to the nucleus. The protein resides in the nucleolus. The catalysed reaction is a pseudouridine in rRNA + S-adenosyl-L-methionine = an N(1)-methylpseudouridine in rRNA + S-adenosyl-L-homocysteine + H(+). S-adenosyl-L-methionine-dependent pseudouridine N(1)-methyltransferase that methylates the pseudouridine corresponding to position 1189 (Psi1189) in S.cerevisiae 18S rRNA. Involved the biosynthesis of the hypermodified N1-methyl-N3-(3-amino-3-carboxypropyl) pseudouridine (m1acp3-Psi) conserved in eukaryotic 18S rRNA. Also has an essential role in 40S ribosomal subunit biogenesis independent on its methyltransferase activity, facilitating the incorporation of ribosomal protein S19 during the formation of pre-ribosomes. This is Ribosomal RNA small subunit methyltransferase NEP1 from Candida albicans (Yeast).